A 420-amino-acid polypeptide reads, in one-letter code: L-cysteine:1D-myo-inositol 2-amino-2-deoxy-alpha-D-glucopyranoside ligase (420 aa).

Position 43 (Cys43) interacts with Zn(2+). L-cysteinyl-5'-AMP contacts are provided by residues Cys43–Thr46, Thr58, and Asn81–Thr83. A 'HIGH' region motif is present at residues Ile45–His55. Residues Glu187–Pro192 carry the 'ERGGDP' region motif. Residue Trp227 participates in L-cysteinyl-5'-AMP binding. Position 231 (Cys231) interacts with Zn(2+). Gly249–Asp251 serves as a coordination point for L-cysteinyl-5'-AMP. His256 provides a ligand contact to Zn(2+). Residue Ile289 participates in L-cysteinyl-5'-AMP binding. Residues Lys295–Ser299 carry the 'KMSKS' region motif.

The protein belongs to the class-I aminoacyl-tRNA synthetase family. MshC subfamily. As to quaternary structure, monomer. The cofactor is Zn(2+).

It carries out the reaction 1D-myo-inositol 2-amino-2-deoxy-alpha-D-glucopyranoside + L-cysteine + ATP = 1D-myo-inositol 2-(L-cysteinylamino)-2-deoxy-alpha-D-glucopyranoside + AMP + diphosphate + H(+). Its function is as follows. Catalyzes the ATP-dependent condensation of GlcN-Ins and L-cysteine to form L-Cys-GlcN-Ins. The protein is L-cysteine:1D-myo-inositol 2-amino-2-deoxy-alpha-D-glucopyranoside ligase of Segniliparus rotundus (strain ATCC BAA-972 / CDC 1076 / CIP 108378 / DSM 44985 / JCM 13578).